The following is a 296-amino-acid chain: Tubulin polyglutamylase complex subunit 2 (296 aa).

Positions 254-265 (SKNKILIPKKKG) are enriched in basic residues. The tract at residues 254-296 (SKNKILIPKKKGPVPPASGQKGPGPLPPPTSKPTTGSGNPVRK) is disordered. Positions 285 to 296 (KPTTGSGNPVRK) are enriched in low complexity.

Part of the neuronal tubulin polyglutamylase complex which contains TPGS1, TPGS2, TTLL1, LRRC49 and NICN1. Interacts with CSTPP1 and LRRC49.

The protein localises to the cytoplasm. Its subcellular location is the cytoskeleton. The protein resides in the microtubule organizing center. It is found in the centrosome. It localises to the centriolar satellite. Its function is as follows. Subunit of the tubulin polyglutamylase complex (TPGC). The complex mediates cilia and flagella polyglutamylation which is essential for their biogenesis and motility. The polypeptide is Tubulin polyglutamylase complex subunit 2 (Tpgs2) (Mus musculus (Mouse)).